The chain runs to 397 residues: Argininosuccinate synthase (397 aa).

8-16 (AYSGGLDTS) serves as a coordination point for ATP. 2 residues coordinate L-citrulline: Y86 and S91. G116 contacts ATP. L-aspartate contacts are provided by T118, N122, and D123. An L-citrulline-binding site is contributed by N122. The L-citrulline site is built by R126, S175, S184, E260, and Y272.

It belongs to the argininosuccinate synthase family. Type 1 subfamily. Homotetramer.

It localises to the cytoplasm. The catalysed reaction is L-citrulline + L-aspartate + ATP = 2-(N(omega)-L-arginino)succinate + AMP + diphosphate + H(+). It participates in amino-acid biosynthesis; L-arginine biosynthesis; L-arginine from L-ornithine and carbamoyl phosphate: step 2/3. The chain is Argininosuccinate synthase from Clostridium botulinum (strain 657 / Type Ba4).